We begin with the raw amino-acid sequence, 619 residues long: Lateral signaling target protein 2 homolog (619 aa).

The segment at Asp-501–Ile-561 adopts an FYVE-type zinc-finger fold. Residues Cys-507, Cys-510, Cys-523, Cys-526, Cys-531, Cys-534, Cys-553, and Cys-556 each coordinate Zn(2+). Positions His-598–Ile-619 are disordered. A compositionally biased stretch (polar residues) spans Asp-603–Ile-619.

Belongs to the lst-2 family.

In terms of biological role, negative regulator of epidermal growth factor receptor (EGFR) signaling. This chain is Lateral signaling target protein 2 homolog, found in Brugia malayi (Filarial nematode worm).